Consider the following 171-residue polypeptide: MPLPLFASEGGFGLNLNLFETNLINLVIVIGVLYWFLKGFLGGILERRRQAILKDLEDSEGRLRQATTDLARAQEDLAAAQQKAEKIRSDGKARAEAIRKDGEMRTINAMAAVKQDALADLNAEGARLTEQLRREAALAAIDKVMTELPGRLDQAGQSRLIDASISNLEDA.

The helical transmembrane segment at 24–44 (INLVIVIGVLYWFLKGFLGGI) threads the bilayer.

This sequence belongs to the ATPase B chain family. F-type ATPases have 2 components, F(1) - the catalytic core - and F(0) - the membrane proton channel. F(1) has five subunits: alpha(3), beta(3), gamma(1), delta(1), epsilon(1). F(0) has four main subunits: a(1), b(1), b'(1) and c(10-14). The alpha and beta chains form an alternating ring which encloses part of the gamma chain. F(1) is attached to F(0) by a central stalk formed by the gamma and epsilon chains, while a peripheral stalk is formed by the delta, b and b' chains.

The protein localises to the cellular thylakoid membrane. Its function is as follows. F(1)F(0) ATP synthase produces ATP from ADP in the presence of a proton or sodium gradient. F-type ATPases consist of two structural domains, F(1) containing the extramembraneous catalytic core and F(0) containing the membrane proton channel, linked together by a central stalk and a peripheral stalk. During catalysis, ATP synthesis in the catalytic domain of F(1) is coupled via a rotary mechanism of the central stalk subunits to proton translocation. Functionally, component of the F(0) channel, it forms part of the peripheral stalk, linking F(1) to F(0). In Synechococcus sp. (strain WH7803), this protein is ATP synthase subunit b.